The sequence spans 67 residues: Large ribosomal subunit protein bL35 (67 aa).

Belongs to the bacterial ribosomal protein bL35 family.

This chain is Large ribosomal subunit protein bL35, found in Zymomonas mobilis subsp. mobilis (strain ATCC 31821 / ZM4 / CP4).